A 282-amino-acid polypeptide reads, in one-letter code: Putative hydrolase Bmul_3283/BMULJ_05242 (282 aa).

Positions 124, 126, and 155 each coordinate Mg(2+).

This sequence belongs to the FAH family. Mg(2+) is required as a cofactor.

The protein is Putative hydrolase Bmul_3283/BMULJ_05242 of Burkholderia multivorans (strain ATCC 17616 / 249).